The chain runs to 75 residues: Large ribosomal subunit protein bL31 (75 aa).

Zn(2+) is bound by residues Cys16, Cys18, Cys37, and Cys40.

Belongs to the bacterial ribosomal protein bL31 family. Type A subfamily. Part of the 50S ribosomal subunit. Requires Zn(2+) as cofactor.

Binds the 23S rRNA. This is Large ribosomal subunit protein bL31 from Legionella pneumophila (strain Paris).